The chain runs to 362 residues: Large ribosomal subunit protein uL2m (362 aa).

Residues 1–23 (MLSYNRFRGYLIPQIHALKLFRY) constitute a mitochondrion transit peptide. The disordered stretch occupies residues 306 to 362 (AMNPCDHPHGGGGGKSIGNKPSQSPWGVLAKGGYKTRRGKNVNKLLVRDRPRGKEKR). Over residues 351–362 (LVRDRPRGKEKR) the composition is skewed to basic and acidic residues.

Belongs to the universal ribosomal protein uL2 family. As to quaternary structure, component of the mitochondrial large ribosomal subunit (mt-LSU). Mature yeast 74S mitochondrial ribosomes consist of a small (37S) and a large (54S) subunit. The 37S small subunit contains a 15S ribosomal RNA (15S mt-rRNA) and at least 32 different proteins. The 54S large subunit contains a 21S rRNA (21S mt-rRNA) and at least 45 different proteins. uL2m has a Na/K ligand binding site.

The protein localises to the mitochondrion. Functionally, component of the mitochondrial ribosome (mitoribosome), a dedicated translation machinery responsible for the synthesis of mitochondrial genome-encoded proteins, including at least some of the essential transmembrane subunits of the mitochondrial respiratory chain. The mitoribosomes are attached to the mitochondrial inner membrane and translation products are cotranslationally integrated into the membrane. The chain is Large ribosomal subunit protein uL2m (rml2) from Schizosaccharomyces pombe (strain 972 / ATCC 24843) (Fission yeast).